The sequence spans 463 residues: Cysteine--tRNA ligase (463 aa).

Zn(2+) is bound at residue C29. The 'HIGH' region signature appears at 31–41; that stretch reads PTVYDFAHIGN. 3 residues coordinate Zn(2+): C227, H252, and E256. The 'KMSKS' region signature appears at 285–289; it reads KMSKS. K288 lines the ATP pocket.

Belongs to the class-I aminoacyl-tRNA synthetase family. In terms of assembly, monomer. Requires Zn(2+) as cofactor.

It localises to the cytoplasm. It catalyses the reaction tRNA(Cys) + L-cysteine + ATP = L-cysteinyl-tRNA(Cys) + AMP + diphosphate. The chain is Cysteine--tRNA ligase from Rhodopseudomonas palustris (strain BisA53).